We begin with the raw amino-acid sequence, 339 residues long: Protein H339R (339 aa).

It belongs to the asfivirus H339R family. Interacts with host NACA (alpha chain of nascent polypeptide-associated complex).

It localises to the host cytoplasm. Its subcellular location is the host nucleus. The chain is Protein H339R from African swine fever virus (isolate Tick/Malawi/Lil 20-1/1983) (ASFV).